The following is a 431-amino-acid chain: UDP-N-acetylmuramate--L-alanine ligase (431 aa).

108–114 serves as a coordination point for ATP; that stretch reads GAHGKST.

This sequence belongs to the MurCDEF family.

The protein localises to the cytoplasm. It carries out the reaction UDP-N-acetyl-alpha-D-muramate + L-alanine + ATP = UDP-N-acetyl-alpha-D-muramoyl-L-alanine + ADP + phosphate + H(+). Its pathway is cell wall biogenesis; peptidoglycan biosynthesis. Cell wall formation. The protein is UDP-N-acetylmuramate--L-alanine ligase of Campylobacter jejuni subsp. jejuni serotype O:6 (strain 81116 / NCTC 11828).